A 292-amino-acid chain; its full sequence is 1D-myo-inositol 2-acetamido-2-deoxy-alpha-D-glucopyranoside deacetylase (292 aa).

Positions 12, 15, and 147 each coordinate Zn(2+).

This sequence belongs to the MshB deacetylase family. The cofactor is Zn(2+).

The catalysed reaction is 1D-myo-inositol 2-acetamido-2-deoxy-alpha-D-glucopyranoside + H2O = 1D-myo-inositol 2-amino-2-deoxy-alpha-D-glucopyranoside + acetate. Its function is as follows. Catalyzes the deacetylation of 1D-myo-inositol 2-acetamido-2-deoxy-alpha-D-glucopyranoside (GlcNAc-Ins) in the mycothiol biosynthesis pathway. In Rhodococcus jostii (strain RHA1), this protein is 1D-myo-inositol 2-acetamido-2-deoxy-alpha-D-glucopyranoside deacetylase.